The primary structure comprises 449 residues: Myb family transcription factor PHL6 (449 aa).

Positions 49-72 (PFIRSQSPDSPGQLWPKNSSQSTF) are disordered. The region spanning 238–298 (ANQKSRMRWT…HLQKYRLAKY (61 aa)) is the HTH myb-type domain. Positions 269–294 (PKAVKKLMNVEGLTIYHVKSHLQKYR) form a DNA-binding region, H-T-H motif. The interval 301–327 (EKKEEKRTDNSEEKKLALSKSEADEKK) is disordered. The segment at 334–354 (TEALRMQMEVQKQLHEQLEVQ) is coiled coil. Positions 347–352 (LHEQLE) match the LHEQLE motif. The interval 376 to 449 (RKTGRWISSS…NIAESEDPKR (74 aa)) is disordered. Positions 381–410 (WISSSSQTVLSPSDDSIPDSQNMSKTKASS) are enriched in polar residues.

Belongs to the MYB-CC family.

Its subcellular location is the nucleus. The sequence is that of Myb family transcription factor PHL6 from Arabidopsis thaliana (Mouse-ear cress).